A 243-amino-acid polypeptide reads, in one-letter code: NifU-like scaffold protein (243 aa).

It belongs to the NifU family. Homodimer.

Its subcellular location is the plastid. It localises to the apicoplast. It participates in cofactor biosynthesis; iron-sulfur cluster biosynthesis. In terms of biological role, binds and transfers [4Fe-4S] iron-sulfur clusters to target proteins. In Plasmodium berghei (strain Anka), this protein is NifU-like scaffold protein.